A 362-amino-acid chain; its full sequence is Methylthioribose-1-phosphate isomerase (362 aa).

Residues 49–51, Arg-89, and Gln-201 each bind substrate; that span reads RGA. Asp-242 (proton donor) is an active-site residue. Position 252 to 253 (252 to 253) interacts with substrate; sequence NK.

Belongs to the eIF-2B alpha/beta/delta subunits family. MtnA subfamily.

The catalysed reaction is 5-(methylsulfanyl)-alpha-D-ribose 1-phosphate = 5-(methylsulfanyl)-D-ribulose 1-phosphate. It functions in the pathway amino-acid biosynthesis; L-methionine biosynthesis via salvage pathway; L-methionine from S-methyl-5-thio-alpha-D-ribose 1-phosphate: step 1/6. Catalyzes the interconversion of methylthioribose-1-phosphate (MTR-1-P) into methylthioribulose-1-phosphate (MTRu-1-P). The polypeptide is Methylthioribose-1-phosphate isomerase (Leptospira borgpetersenii serovar Hardjo-bovis (strain JB197)).